Reading from the N-terminus, the 215-residue chain is MDKNKTIRIALTKGRLEKAAVEIFENIGLDCSELKDKGRKLIFHDFKNSIDFVLVKAPDVLTYVEHGAADIGIVGKDTLLEMKKDFYEVLDLKVGKCKFSLASISSFKLNEGFNRMKIATKYPNVTREYFREKGIDVEIIKIEGSVELAPILNLADAIVDIVETGTTLKENGLVIFDDICDISARMIVNRASMKLNKDRITDIIQKVKNYVERES.

The protein belongs to the ATP phosphoribosyltransferase family. Short subfamily. In terms of assembly, heteromultimer composed of HisG and HisZ subunits.

It is found in the cytoplasm. It catalyses the reaction 1-(5-phospho-beta-D-ribosyl)-ATP + diphosphate = 5-phospho-alpha-D-ribose 1-diphosphate + ATP. It participates in amino-acid biosynthesis; L-histidine biosynthesis; L-histidine from 5-phospho-alpha-D-ribose 1-diphosphate: step 1/9. Its function is as follows. Catalyzes the condensation of ATP and 5-phosphoribose 1-diphosphate to form N'-(5'-phosphoribosyl)-ATP (PR-ATP). Has a crucial role in the pathway because the rate of histidine biosynthesis seems to be controlled primarily by regulation of HisG enzymatic activity. The protein is ATP phosphoribosyltransferase (hisG) of Clostridium acetobutylicum (strain ATCC 824 / DSM 792 / JCM 1419 / IAM 19013 / LMG 5710 / NBRC 13948 / NRRL B-527 / VKM B-1787 / 2291 / W).